Consider the following 151-residue polypeptide: Small ribosomal subunit protein uS15 (151 aa).

The protein belongs to the universal ribosomal protein uS15 family. Component of the small ribosomal subunit.

Its subcellular location is the cytoplasm. Component of the small ribosomal subunit. The ribosome is a large ribonucleoprotein complex responsible for the synthesis of proteins in the cell. In Xenopus laevis (African clawed frog), this protein is Small ribosomal subunit protein uS15 (rps13).